A 498-amino-acid polypeptide reads, in one-letter code: UDP-N-acetylmuramate--L-alanine ligase (498 aa).

Gly-133 to Thr-139 serves as a coordination point for ATP.

Belongs to the MurCDEF family.

It localises to the cytoplasm. The catalysed reaction is UDP-N-acetyl-alpha-D-muramate + L-alanine + ATP = UDP-N-acetyl-alpha-D-muramoyl-L-alanine + ADP + phosphate + H(+). It functions in the pathway cell wall biogenesis; peptidoglycan biosynthesis. Functionally, cell wall formation. The protein is UDP-N-acetylmuramate--L-alanine ligase of Wolbachia pipientis wMel.